A 382-amino-acid chain; its full sequence is G-box-binding factor 3 (382 aa).

The span at 1–16 (MGNSSEEPKPPTKSDK) shows a compositional bias: basic and acidic residues. Disordered stretches follow at residues 1-26 (MGNSSEEPKPPTKSDKPSSPPVDQTN), 97-221 (MGSL…GVKL), and 257-285 (ERELKRERRKQSNRESARRSRLRKQAETE). The segment covering 111-130 (TPGTLLSIDTPTKSTGNTDN) has biased composition (polar residues). Residues 155-165 (ADEHKRSRNSS) are compositionally biased toward basic and acidic residues. Low complexity predominate over residues 166–181 (ETDGSTDGSDGNTTGA). Over residues 182–199 (DEPKLKRSREGTPTKDGK) the composition is skewed to basic and acidic residues. Over residues 202 to 216 (VQASSFHSVSPSSGD) the composition is skewed to polar residues. The 64-residue stretch at 259 to 322 (ELKRERRKQS…DKLRGANATL (64 aa)) folds into the bZIP domain. Residues 261-280 (KRERRKQSNRESARRSRLRK) are basic motif. A leucine-zipper region spans residues 287 to 322 (LARKVEALTAENMALRSELNQLNEKSDKLRGANATL). Residues 329 to 382 (SEPEKRVPANMLSRVKNSGAGDKNKNQGDNDSNSTSKLHQLLDTKPRAKAVAAG) form a disordered region. Residues 357–366 (DNDSNSTSKL) show a composition bias toward polar residues.

Belongs to the bZIP family. As to quaternary structure, DNA-binding heterodimer. Interacts with GBF4. Interacts with BZIP16 and BZIP68. As to expression, present only in dark grown leaves and roots.

The protein localises to the nucleus. Binds to the G-box motif (5'-CCACGTGG-3') of the rbcS-1A gene promoter. G-box and G-box-like motifs are cis-acting elements defined in promoters of certain plant genes which are regulated by such diverse stimuli as light-induction or hormone control. This chain is G-box-binding factor 3 (GBF3), found in Arabidopsis thaliana (Mouse-ear cress).